Here is a 207-residue protein sequence, read N- to C-terminus: A-type ATP synthase subunit E (207 aa).

This sequence belongs to the V-ATPase E subunit family. In terms of assembly, has multiple subunits with at least A(3), B(3), C, D, E, F, H, I and proteolipid K(x).

It is found in the cell membrane. Component of the A-type ATP synthase that produces ATP from ADP in the presence of a proton gradient across the membrane. In Methanosphaera stadtmanae (strain ATCC 43021 / DSM 3091 / JCM 11832 / MCB-3), this protein is A-type ATP synthase subunit E.